We begin with the raw amino-acid sequence, 238 residues long: Purine nucleoside phosphorylase DeoD-type (238 aa).

H4 provides a ligand contact to a purine D-ribonucleoside. Phosphate-binding positions include G20, R24, R43, and 87–90 (RVGS). A purine D-ribonucleoside contacts are provided by residues 179-181 (EME) and 203-204 (SD). The active-site Proton donor is the D204.

The protein belongs to the PNP/UDP phosphorylase family. Homohexamer; trimer of homodimers.

It carries out the reaction a purine D-ribonucleoside + phosphate = a purine nucleobase + alpha-D-ribose 1-phosphate. It catalyses the reaction a purine 2'-deoxy-D-ribonucleoside + phosphate = a purine nucleobase + 2-deoxy-alpha-D-ribose 1-phosphate. Its function is as follows. Catalyzes the reversible phosphorolytic breakdown of the N-glycosidic bond in the beta-(deoxy)ribonucleoside molecules, with the formation of the corresponding free purine bases and pentose-1-phosphate. This is Purine nucleoside phosphorylase DeoD-type from Haemophilus ducreyi (strain 35000HP / ATCC 700724).